Here is a 256-residue protein sequence, read N- to C-terminus: Cell division protein ZapD (256 aa).

It belongs to the ZapD family. Interacts with FtsZ.

Its subcellular location is the cytoplasm. Its function is as follows. Cell division factor that enhances FtsZ-ring assembly. Directly interacts with FtsZ and promotes bundling of FtsZ protofilaments, with a reduction in FtsZ GTPase activity. The sequence is that of Cell division protein ZapD from Aromatoleum aromaticum (strain DSM 19018 / LMG 30748 / EbN1) (Azoarcus sp. (strain EbN1)).